Consider the following 390-residue polypeptide: Serpin B4 (390 aa).

At M1 the chain carries N-acetylmethionine.

Belongs to the serpin family. Ov-serpin subfamily. As to expression, squamous cells.

Its subcellular location is the cytoplasm. May act as a protease inhibitor to modulate the host immune response against tumor cells. This Homo sapiens (Human) protein is Serpin B4 (SERPINB4).